The sequence spans 147 residues: Hemoglobin subunit beta-1 (147 aa).

Positions 3 to 147 (EWTDKERSII…VVSALGKQYH (145 aa)) constitute a Globin domain. Heme b-binding residues include histidine 64 and histidine 93.

This sequence belongs to the globin family. As to quaternary structure, heterotetramer of two alpha chains and two beta chains. In terms of tissue distribution, red blood cells.

Involved in oxygen transport from gills to the various peripheral tissues. The polypeptide is Hemoglobin subunit beta-1 (hbb1) (Pagothenia borchgrevinki (Bald rockcod)).